Here is a 181-residue protein sequence, read N- to C-terminus: GTP cyclohydrolase 1 2 (181 aa).

This sequence belongs to the GTP cyclohydrolase I family. In terms of assembly, homomer.

It catalyses the reaction GTP + H2O = 7,8-dihydroneopterin 3'-triphosphate + formate + H(+). It functions in the pathway cofactor biosynthesis; 7,8-dihydroneopterin triphosphate biosynthesis; 7,8-dihydroneopterin triphosphate from GTP: step 1/1. In Pseudomonas syringae pv. tomato (strain ATCC BAA-871 / DC3000), this protein is GTP cyclohydrolase 1 2.